A 1320-amino-acid chain; its full sequence is MYSVEDLLISHGYKPARDAAAPCEDKSERCRSTRTGPRAGQGLLNGYKDGATAHTHSRTSLGTGHVSNSENRISRPRGHREHQSTSRTPEARFLNQPSLAWSSQPQSGRDDIYWSRGRQEGSGSLCPRDWKELESRGMAQAYSLPVHVRENLWEVAGRTEHVMKNAIWEEELRMQDMSLESWKKPRELGRQASDGDGRKRPQEKFEGLYPFVHGEHTSQNRKKSQSLPRALSPKSLNFTEIPVPLHDGHITGVPKVPPYPPSFPSPSEPMRNLEKASSSGPFPRPKFGKPLKTPCYSSHSQPRGEGGFQDHQHRDPRGSYPTRSKDPSHELGMLDPGLEPPVYVPPPSYRSPPQHIPNPYLEDPVPRHVSSNQSQQQVPEKPETSCPLPSGSLAARDLYDAMPGSPPQGLPPQPYPIATHGGSIQYIPFDDPRIRHIKLAQPPEFYEEAKLDDTSYNPGLLTTQEPAIGKRQYDDAPSVPRGPTPSPVNEQSSAFVHSSPRWLQGQLPLGIGPGGFHGQTEHHVMGGLTTNVTDIKAEGHASSPQPQSEGTCKTYTKLRKFETGVQSKKSSKKKSNATIFCLVSIPVKSESLVLATDTNNNDFKLVADKTRGLCQGSALQEQSLLSMSSTDLELQALMGSMAWRRTSPRQGLRESEDGQIDDPRILHLIKPKELQASSPWPGHQYRDQQTQTSFHEDSKSSQLLPATKPGEASNVAPTPTCPDTTASEVCLHTALAFSDQNQKPSVPHLQGQTSLSPSRNSAFSRTSSAINQASMSKGTSDQLPGANPVPKPEVVKGESTTGQCNSTQLFGQFLLKPVSRRPWDLISQLESFNKELQEEEESHGGSGSEDSEAEQPEDCADSRTKSWALQGTRTAQQPAGLALENVASPDRRLNDSQSWNEEPKPGHSSVHPQSLGPSQEEGSRGVPVQWADGSLTAEQKSQEDLNGMCERDFSPRPVSRIAPIDTKAAPLYCLSEPRGSQELTKFGDAVGSVQLGRETPTQVGNGGDTEVLPCVLLPLADKYRGHSTPDFRSLELTLGQEQNAYKLECLDLENTVEVLPSESLQERAERILGIEVAVESLLPSARRTEQSQLPEPDASACNPSSSREDSSHSLALPVGPKVATDAFYGRRKCGWTESPLFVGERAPQASICSDVDGFPTSQATSPEPGKKDEEAKAPFKSTLFHFMEKSTNVVGPEKRLRNPSKVVENLQEKLVSPPKKADSVHLIRMREVNSLSQMRCLSSKSADSVEEPDPLKVIKSSAWLSEGLTSLGGKDEAWQAGHLPSVSQNENGHPEVPRDKMSDQDLWCADSYDPSRVERV.

8 disordered regions span residues 1–124 (MYSV…GSGS), 183–202 (KKPRELGRQASDGDGRKRPQ), 209–233 (YPFVHGEHTSQNRKKSQSLPRALSP), 252–426 (GVPK…SIQY), 452–492 (DDTS…NEQS), 676–720 (ASSP…PTPT), 741–802 (NQKP…STTG), and 835–942 (ELQE…QKSQ). Composition is skewed to polar residues over residues 58–71 (RTSLGTGHVSNSEN) and 95–107 (NQPSLAWSSQPQS). The segment covering 108 to 119 (GRDDIYWSRGRQ) has biased composition (basic and acidic residues). Over residues 255-267 (KVPPYPPSFPSPS) the composition is skewed to pro residues. The segment covering 308–329 (FQDHQHRDPRGSYPTRSKDPSH) has biased composition (basic and acidic residues). Over residues 338-356 (LEPPVYVPPPSYRSPPQHI) the composition is skewed to pro residues. The segment covering 369–378 (VSSNQSQQQV) has biased composition (polar residues). The segment covering 404 to 415 (GSPPQGLPPQPY) has biased composition (pro residues). The segment covering 454-465 (TSYNPGLLTTQE) has biased composition (polar residues). T484 is modified (phosphothreonine). S486 bears the Phosphoserine mark. A compositionally biased stretch (polar residues) spans 741–782 (NQKPSVPHLQGQTSLSPSRNSAFSRTSSAINQASMSKGTSDQ). The segment covering 849-859 (EDSEAEQPEDC) has biased composition (acidic residues). S851 is subject to Phosphoserine. Over residues 865–877 (KSWALQGTRTAQQ) the composition is skewed to polar residues. Residues S1027 and S1033 each carry the phosphoserine modification. 2 disordered regions span residues 1085-1116 (ARRTEQSQLPEPDASACNPSSSREDSSHSLAL) and 1153-1174 (SDVDGFPTSQATSPEPGKKDEE). Phosphoserine occurs at positions 1245 and 1248. The tract at residues 1275–1320 (DEAWQAGHLPSVSQNENGHPEVPRDKMSDQDLWCADSYDPSRVERV) is disordered. Over residues 1292–1303 (GHPEVPRDKMSD) the composition is skewed to basic and acidic residues.

The protein resides in the cell junction. It is found in the adherens junction. The polypeptide is Junctional cadherin 5-associated protein (Mus musculus (Mouse)).